A 507-amino-acid polypeptide reads, in one-letter code: Glucose-6-phosphate 1-dehydrogenase (507 aa).

NADP(+) contacts are provided by Arg57 and Lys168. The substrate site is built by His198, Lys202, Glu236, and Asp255. Residue His260 is the Proton acceptor of the active site. Residue Lys356 coordinates substrate.

It belongs to the glucose-6-phosphate dehydrogenase family.

The enzyme catalyses D-glucose 6-phosphate + NADP(+) = 6-phospho-D-glucono-1,5-lactone + NADPH + H(+). It participates in carbohydrate degradation; pentose phosphate pathway; D-ribulose 5-phosphate from D-glucose 6-phosphate (oxidative stage): step 1/3. Its function is as follows. Catalyzes the oxidation of glucose 6-phosphate to 6-phosphogluconolactone. The protein is Glucose-6-phosphate 1-dehydrogenase of Chlamydia muridarum (strain MoPn / Nigg).